The chain runs to 86 residues: Weak neurotoxin 5 (86 aa).

A signal peptide spans 1 to 21 (MKTLLLTLVVVTIVCLDLGYT). 5 disulfide bridges follow: cysteine 24-cysteine 45, cysteine 27-cysteine 32, cysteine 38-cysteine 63, cysteine 67-cysteine 78, and cysteine 79-cysteine 84.

This sequence belongs to the three-finger toxin family. Ancestral subfamily. Orphan group II sub-subfamily. In terms of tissue distribution, expressed by the venom gland.

The protein localises to the secreted. Functionally, binds with low affinity to muscular and very low affinity to neuronal (alpha-7/CHRNA7) nicotinic acetylcholine receptor (nAChR). This chain is Weak neurotoxin 5, found in Naja sputatrix (Malayan spitting cobra).